Here is a 217-residue protein sequence, read N- to C-terminus: ATP phosphoribosyltransferase (217 aa).

Belongs to the ATP phosphoribosyltransferase family. Short subfamily. As to quaternary structure, heteromultimer composed of HisG and HisZ subunits.

Its subcellular location is the cytoplasm. It catalyses the reaction 1-(5-phospho-beta-D-ribosyl)-ATP + diphosphate = 5-phospho-alpha-D-ribose 1-diphosphate + ATP. It functions in the pathway amino-acid biosynthesis; L-histidine biosynthesis; L-histidine from 5-phospho-alpha-D-ribose 1-diphosphate: step 1/9. Its function is as follows. Catalyzes the condensation of ATP and 5-phosphoribose 1-diphosphate to form N'-(5'-phosphoribosyl)-ATP (PR-ATP). Has a crucial role in the pathway because the rate of histidine biosynthesis seems to be controlled primarily by regulation of HisG enzymatic activity. The sequence is that of ATP phosphoribosyltransferase from Burkholderia lata (strain ATCC 17760 / DSM 23089 / LMG 22485 / NCIMB 9086 / R18194 / 383).